A 426-amino-acid polypeptide reads, in one-letter code: Serine--tRNA ligase (426 aa).

Residues 44 to 67 are disordered; sequence TEKQALQSERNATSKQIGMLKKKG. A compositionally biased stretch (polar residues) spans 47 to 59; sequence QALQSERNATSKQ. An L-serine-binding site is contributed by 231 to 233; that stretch reads TAE. ATP is bound by residues 262-264 and V278; that span reads RRE. E285 contacts L-serine. 349-352 is an ATP binding site; it reads EVSS. Position 384 (S384) interacts with L-serine.

Belongs to the class-II aminoacyl-tRNA synthetase family. Type-1 seryl-tRNA synthetase subfamily. In terms of assembly, homodimer. The tRNA molecule binds across the dimer.

It localises to the cytoplasm. The catalysed reaction is tRNA(Ser) + L-serine + ATP = L-seryl-tRNA(Ser) + AMP + diphosphate + H(+). It carries out the reaction tRNA(Sec) + L-serine + ATP = L-seryl-tRNA(Sec) + AMP + diphosphate + H(+). Its pathway is aminoacyl-tRNA biosynthesis; selenocysteinyl-tRNA(Sec) biosynthesis; L-seryl-tRNA(Sec) from L-serine and tRNA(Sec): step 1/1. Its function is as follows. Catalyzes the attachment of serine to tRNA(Ser). Is also able to aminoacylate tRNA(Sec) with serine, to form the misacylated tRNA L-seryl-tRNA(Sec), which will be further converted into selenocysteinyl-tRNA(Sec). The polypeptide is Serine--tRNA ligase (Akkermansia muciniphila (strain ATCC BAA-835 / DSM 22959 / JCM 33894 / BCRC 81048 / CCUG 64013 / CIP 107961 / Muc)).